A 378-amino-acid polypeptide reads, in one-letter code: Anhydro-N-acetylmuramic acid kinase (378 aa).

9–16 (GTSVDGID) serves as a coordination point for ATP.

The protein belongs to the anhydro-N-acetylmuramic acid kinase family.

It catalyses the reaction 1,6-anhydro-N-acetyl-beta-muramate + ATP + H2O = N-acetyl-D-muramate 6-phosphate + ADP + H(+). Its pathway is amino-sugar metabolism; 1,6-anhydro-N-acetylmuramate degradation. It participates in cell wall biogenesis; peptidoglycan recycling. In terms of biological role, catalyzes the specific phosphorylation of 1,6-anhydro-N-acetylmuramic acid (anhMurNAc) with the simultaneous cleavage of the 1,6-anhydro ring, generating MurNAc-6-P. Is required for the utilization of anhMurNAc either imported from the medium or derived from its own cell wall murein, and thus plays a role in cell wall recycling. The polypeptide is Anhydro-N-acetylmuramic acid kinase (Microcystis aeruginosa (strain NIES-843 / IAM M-2473)).